The sequence spans 304 residues: 6-dehydroglucose reductase (304 aa).

Positions 28, 29, and 56 each coordinate NADP(+). The active-site Proton donor is the Y61. 3 residues coordinate D-glucose: Y61, H133, and R134. NADP(+)-binding residues include S163, N164, Q185, S215, L217, G219, G268, S269, Q270, and R274.

It belongs to the aldo/keto reductase family.

It catalyses the reaction D-glucose + NADP(+) = 6-dehydro-D-glucose + NADPH + H(+). Its function is as follows. Part of the alkanesulfonate monooxygenase (sulfo-ASMO) pathway, a D-sulfoquinovose degradation pathway that enables the complete utilization of all carbons within sulfoquinovose (SQ) with concomitant production of inorganic sulfite. Catalyzes the NADP-dependent reduction of 6-dehydro-D-glucose to D-glucose. Can also catalyze the reversible reaction, the formation of 6-dehydro-D-glucose from D-glucose in the presence of NADP(+). The sequence is that of 6-dehydroglucose reductase from Novosphingobium aromaticivorans (strain ATCC 700278 / DSM 12444 / CCUG 56034 / CIP 105152 / NBRC 16084 / F199).